The sequence spans 308 residues: HPr kinase/phosphorylase (308 aa).

Active-site residues include H138 and K159. Residue 153 to 160 (GESGLGKS) participates in ATP binding. Position 160 (S160) interacts with Mg(2+). D177 serves as the catalytic Proton acceptor; for phosphorylation activity. Proton donor; for dephosphorylation activity. An important for the catalytic mechanism of both phosphorylation and dephosphorylation region spans residues 201–210 (LEVRGLGLLD). A Mg(2+)-binding site is contributed by E202. R243 is a catalytic residue. Residues 264–269 (QVAAGR) form an important for the catalytic mechanism of dephosphorylation region.

The protein belongs to the HPrK/P family. In terms of assembly, homohexamer. It depends on Mg(2+) as a cofactor.

It carries out the reaction [HPr protein]-L-serine + ATP = [HPr protein]-O-phospho-L-serine + ADP + H(+). It catalyses the reaction [HPr protein]-O-phospho-L-serine + phosphate + H(+) = [HPr protein]-L-serine + diphosphate. In terms of biological role, catalyzes the ATP- as well as the pyrophosphate-dependent phosphorylation of a specific serine residue in HPr, a phosphocarrier protein of the phosphoenolpyruvate-dependent sugar phosphotransferase system (PTS). HprK/P also catalyzes the pyrophosphate-producing, inorganic phosphate-dependent dephosphorylation (phosphorolysis) of seryl-phosphorylated HPr (P-Ser-HPr). The polypeptide is HPr kinase/phosphorylase (Bordetella avium (strain 197N)).